Consider the following 479-residue polypeptide: Protein ORD (479 aa).

The segment at 102–140 (KEEETEPESESDLDEGPSTSKQALERMVQRAERKAKEAS) is disordered. A compositionally biased stretch (acidic residues) spans 104-116 (EETEPESESDLDE). Over residues 124–140 (ALERMVQRAERKAKEAS) the composition is skewed to basic and acidic residues.

Interacts with Sce.

It is found in the nucleus. Its subcellular location is the chromosome. It localises to the centromere. In terms of biological role, essential for proper maintenance of sister-chromatid cohesion in both male and female meiosis. Mutations in ord cause premature separation of the sister chromatids in meiosis I and random segregation in both meiotic divisions. Required for chiasma maintenance in female meiosis. Mutations in ord reduce recombination in female meiosis. The protein is Protein ORD (ord) of Drosophila melanogaster (Fruit fly).